Consider the following 29-residue polypeptide: U1-pseudomyrmecitoxin-Pt1 subunit SS2 (29 aa).

It belongs to the myrmexin family. As to quaternary structure, heterodimer composed of subunit SS2 and subunit LS1 (U1-PSDTX-Pt1e), and heterodimer composed of subunit SS2 and LS2 (U1-PSDTX-Pt1c); disulfide-linked. As to expression, expressed by the venom gland.

The protein resides in the secreted. In terms of biological role, this heterodimer may have anti-inflammatory properties, since the myrmexin complex (composed of 6 SS-LS heterodimers) inhibits carrageenin-induced edema in a dose-dependent manner (after subcutaneous injection into rats). This Pseudomyrmex triplarinus (Ant) protein is U1-pseudomyrmecitoxin-Pt1 subunit SS2.